A 226-amino-acid polypeptide reads, in one-letter code: Sugar fermentation stimulation protein homolog (226 aa).

The protein belongs to the SfsA family.

In Clostridium beijerinckii (strain ATCC 51743 / NCIMB 8052) (Clostridium acetobutylicum), this protein is Sugar fermentation stimulation protein homolog.